The following is an 859-amino-acid chain: Leucine--tRNA ligase (859 aa).

A 'HIGH' region motif is present at residues 43 to 53 (PYPSGRIHMGH). The 'KMSKS' region motif lies at 614–618 (KMSKS). Residue Lys-617 coordinates ATP.

The protein belongs to the class-I aminoacyl-tRNA synthetase family.

It is found in the cytoplasm. The catalysed reaction is tRNA(Leu) + L-leucine + ATP = L-leucyl-tRNA(Leu) + AMP + diphosphate. The protein is Leucine--tRNA ligase of Magnetococcus marinus (strain ATCC BAA-1437 / JCM 17883 / MC-1).